A 184-amino-acid chain; its full sequence is Large ribosomal subunit protein uL6 (184 aa).

Belongs to the universal ribosomal protein uL6 family. In terms of assembly, part of the 50S ribosomal subunit.

In terms of biological role, this protein binds to the 23S rRNA, and is important in its secondary structure. It is located near the subunit interface in the base of the L7/L12 stalk, and near the tRNA binding site of the peptidyltransferase center. The chain is Large ribosomal subunit protein uL6 from Amoebophilus asiaticus (strain 5a2).